The following is a 200-amino-acid chain: Thymidine kinase (200 aa).

Residues 15–22 and 88–91 contribute to the ATP site; these read GPMYSGKS and DEVQ. Residue Glu-89 is the Proton acceptor of the active site. Zn(2+) contacts are provided by Cys-145, Cys-148, Cys-177, and Cys-180.

Belongs to the thymidine kinase family. As to quaternary structure, homotetramer.

Its subcellular location is the cytoplasm. It catalyses the reaction thymidine + ATP = dTMP + ADP + H(+). This Mycoplasma mobile (strain ATCC 43663 / 163K / NCTC 11711) (Mesomycoplasma mobile) protein is Thymidine kinase.